We begin with the raw amino-acid sequence, 412 residues long: Putative competence-damage inducible protein (412 aa).

Belongs to the CinA family.

This Bacillus cereus (strain ATCC 14579 / DSM 31 / CCUG 7414 / JCM 2152 / NBRC 15305 / NCIMB 9373 / NCTC 2599 / NRRL B-3711) protein is Putative competence-damage inducible protein.